The following is a 515-amino-acid chain: Probable 2-isopropylmalate synthase (515 aa).

In terms of domain architecture, Pyruvate carboxyltransferase spans 20–271 (VTVFDTTLRD…KTNIRTEYLV (252 aa)). 4 residues coordinate a divalent metal cation: Asp-29, His-209, His-211, and Asn-245.

It belongs to the alpha-IPM synthase/homocitrate synthase family. As to quaternary structure, homodimer. A divalent metal cation serves as cofactor.

It catalyses the reaction 3-methyl-2-oxobutanoate + acetyl-CoA + H2O = (2S)-2-isopropylmalate + CoA + H(+). It participates in amino-acid biosynthesis; L-leucine biosynthesis; L-leucine from 3-methyl-2-oxobutanoate: step 1/4. In terms of biological role, catalyzes the condensation of the acetyl group of acetyl-CoA with 3-methyl-2-oxobutanoate (2-oxoisovalerate) to form 3-carboxy-3-hydroxy-4-methylpentanoate (2-isopropylmalate). The polypeptide is Probable 2-isopropylmalate synthase (leuA) (Methanosarcina acetivorans (strain ATCC 35395 / DSM 2834 / JCM 12185 / C2A)).